A 188-amino-acid polypeptide reads, in one-letter code: UPF0397 protein LCK_00164 (188 aa).

5 helical membrane passes run 15 to 35, 48 to 68, 79 to 99, 121 to 141, and 154 to 174; these read VVATGIGAAVFFVLMKFIAIP, GWLALIAGLFGPVVGLLVGLI, GAPWWSWVIADGVFGLLLGFG, WQAVSNVLVWVIIAPLGDIII, and AVTTVVNTISVAIIGSLLLVA.

Belongs to the UPF0397 family.

The protein localises to the cell membrane. The polypeptide is UPF0397 protein LCK_00164 (Leuconostoc citreum (strain KM20)).